Reading from the N-terminus, the 140-residue chain is PDZ domain-containing protein 11 (140 aa).

The region spanning 47–129 (TITLKKPPGA…ISMRVRFFPY (83 aa)) is the PDZ domain.

As to quaternary structure, interacts with ATP2B1, ATP2B2, ATP2B3, ATP2B4 and ATP7A. Interacts with PLEKHA7 (via WW domains) at zonula adherens; this interaction is essential for the interaction between PLEKHA7 and the ADAM10-binding protein TSPAN33. Interacts with SLC5A6. In terms of tissue distribution, widely expressed (at protein level).

It is found in the secreted. The protein resides in the cytoplasm. Its subcellular location is the cell junction. The protein localises to the adherens junction. It localises to the cell membrane. Its function is as follows. Mediates docking of ADAM10 to zonula adherens by interacting with PLEKHA7 which is required for PLEKHA7 to interact with the ADAM10-binding protein TSPAN33. This Homo sapiens (Human) protein is PDZ domain-containing protein 11 (PDZD11).